We begin with the raw amino-acid sequence, 463 residues long: Argininosuccinate lyase (463 aa).

This sequence belongs to the lyase 1 family. Argininosuccinate lyase subfamily.

The protein resides in the cytoplasm. The enzyme catalyses 2-(N(omega)-L-arginino)succinate = fumarate + L-arginine. It functions in the pathway amino-acid biosynthesis; L-arginine biosynthesis; L-arginine from L-ornithine and carbamoyl phosphate: step 3/3. The sequence is that of Argininosuccinate lyase from Bradyrhizobium sp. (strain BTAi1 / ATCC BAA-1182).